An 83-amino-acid polypeptide reads, in one-letter code: Glutaredoxin 3 (83 aa).

In terms of domain architecture, Glutaredoxin spans 2-83 (ANVEIYTKET…ARGGLDPLLK (82 aa)). Cysteine 12 and cysteine 15 are disulfide-bonded.

It belongs to the glutaredoxin family. As to quaternary structure, monomer.

Its function is as follows. The disulfide bond functions as an electron carrier in the glutathione-dependent synthesis of deoxyribonucleotides by the enzyme ribonucleotide reductase. In addition, it is also involved in reducing some disulfides in a coupled system with glutathione reductase. This Escherichia coli O157:H7 protein is Glutaredoxin 3 (grxC).